Reading from the N-terminus, the 339-residue chain is N-acetyl-gamma-glutamyl-phosphate reductase (339 aa).

Cysteine 145 is a catalytic residue.

Belongs to the NAGSA dehydrogenase family. Type 1 subfamily.

The protein resides in the cytoplasm. It catalyses the reaction N-acetyl-L-glutamate 5-semialdehyde + phosphate + NADP(+) = N-acetyl-L-glutamyl 5-phosphate + NADPH + H(+). The protein operates within amino-acid biosynthesis; L-arginine biosynthesis; N(2)-acetyl-L-ornithine from L-glutamate: step 3/4. In terms of biological role, catalyzes the NADPH-dependent reduction of N-acetyl-5-glutamyl phosphate to yield N-acetyl-L-glutamate 5-semialdehyde. This Thermotoga sp. (strain RQ2) protein is N-acetyl-gamma-glutamyl-phosphate reductase.